Reading from the N-terminus, the 279-residue chain is Energy-coupling factor transporter ATP-binding protein EcfA (279 aa).

Residues 4–239 enclose the ABC transporter domain; it reads VETKDLYFRY…VETIRKANLR (236 aa). Residue 37–44 participates in ATP binding; that stretch reads GPNGAGKS.

This sequence belongs to the ABC transporter superfamily. Energy-coupling factor EcfA family. In terms of assembly, forms a stable energy-coupling factor (ECF) transporter complex composed of 2 membrane-embedded substrate-binding proteins (S component), 2 ATP-binding proteins (A component) and 2 transmembrane proteins (T component).

The protein resides in the cell membrane. ATP-binding (A) component of a common energy-coupling factor (ECF) ABC-transporter complex. Unlike classic ABC transporters this ECF transporter provides the energy necessary to transport a number of different substrates. This Methanocaldococcus jannaschii (strain ATCC 43067 / DSM 2661 / JAL-1 / JCM 10045 / NBRC 100440) (Methanococcus jannaschii) protein is Energy-coupling factor transporter ATP-binding protein EcfA.